The chain runs to 776 residues: Glucocorticoid receptor (776 aa).

Disordered stretches follow at residues 1–25, 47–86, and 394–415; these read MDPKDLLKPSSGSPAVRGSPHYNDK, SCPTSTASQSNTRQQQHFQKQLTATGDSTNGLNNNVPQPD, and SSPGIRSDASPSPSTSSTSTGP. The modulating stretch occupies residues 1 to 419; the sequence is MDPKDLLKPS…STSTGPPPKL (419 aa). A compositionally biased stretch (polar residues) spans 47-83; it reads SCPTSTASQSNTRQQQHFQKQLTATGDSTNGLNNNVP. Residues 403 to 413 are compositionally biased toward low complexity; it reads SPSPSTSSTST. 2 NR C4-type zinc fingers span residues 420–440 and 456–480; these read CLVCSDEASGCHYGVLTCGSC and CAGRNDCIIDKIRRKNCPACRYRKC. Positions 420-485 form a DNA-binding region, nuclear receptor; it reads CLVCSDEASG…RYRKCLQAGM (66 aa). The tract at residues 486–522 is hinge; sequence NLEARKTKKKIKGIQQSTTATARESPETSMTRTLVPA. Positions 523–757 constitute an NR LBD domain; sequence SVAQLTPTLI…FPDMLSEIIS (235 aa).

It belongs to the nuclear hormone receptor family. NR3 subfamily. Heteromultimeric cytoplasmic complex with HSP90. Upon ligand binding the complex undergoes a conformation change and moves to the nucleus, where it dissociates. Binds to DNA as a homodimer, and as heterodimer with NR3C2. Interaction with numerous other transcription factors modulates transcription activation. In terms of tissue distribution, expressed in liver with relative abundance.

Its subcellular location is the cytoplasm. It is found in the nucleus. It localises to the mitochondrion. The protein resides in the cytoskeleton. The protein localises to the spindle. Its subcellular location is the microtubule organizing center. It is found in the centrosome. Its function is as follows. Receptor for glucocorticoids (GC). Has a dual mode of action: as a transcription factor that binds to glucocorticoid response elements (GRE), both for nuclear and mitochondrial DNA, and as a modulator of other transcription factors. Affects inflammatory responses, cellular proliferation and differentiation in target tissues. Involved in chromatin remodeling. Plays a role in rapid mRNA degradation by binding to the 5' UTR of target mRNAs and interacting with PNRC2 in a ligand-dependent manner which recruits the RNA helicase UPF1 and the mRNA-decapping enzyme DCP1A, leading to RNA decay. Could act as a coactivator for STAT5-dependent transcription upon growth hormone (GH) stimulation and could reveal an essential role of hepatic GR in the control of body growth. Mediates glucocorticoid-induced apoptosis. Promotes accurate chromosome segregation during mitosis. May act as a tumor suppressor. May play a negative role in adipogenesis through the regulation of lipolytic and antilipogenic gene expression. This chain is Glucocorticoid receptor (nr3c1), found in Xenopus laevis (African clawed frog).